The sequence spans 26 residues: Histone H2B.1, sperm (26 aa).

A disordered region spans residues 1 to 26 (MPSQKSPTKRSPTKRSPQKGGKGAKR). Short sequence motifs (SPKK motif) lie at residues 6-9 (SPTK), 11-14 (SPTK), and 16-19 (SPQK). The span at 7 to 26 (PTKRSPTKRSPQKGGKGAKR) shows a compositional bias: basic residues. 2 positions are modified to phosphoserine: Ser11 and Ser16.

Belongs to the histone H2B family. In terms of assembly, the nucleosome is a histone octamer containing two molecules each of H2A, H2B, H3 and H4 assembled in one H3-H4 heterotetramer and two H2A-H2B heterodimers. The octamer wraps approximately 147 bp of DNA. Monoubiquitination gives a specific tag for epigenetic transcriptional activation and is also prerequisite for histone H3 'Lys-4' and 'Lys-79' methylation. Post-translationally, phosphorylated on SPKK motifs 2 and 3; which may regulate DNA binding. Dephosphorylated during maturation of spermatids to mature sperm and rephosphorylated at fertilization.

The protein localises to the nucleus. Its subcellular location is the chromosome. Core component of nucleosome. Nucleosomes wrap and compact DNA into chromatin, limiting DNA accessibility to the cellular machineries which require DNA as a template. Histones thereby play a central role in transcription regulation, DNA repair, DNA replication and chromosomal stability. DNA accessibility is regulated via a complex set of post-translational modifications of histones, also called histone code, and nucleosome remodeling. The polypeptide is Histone H2B.1, sperm (Echinus esculentus (Sea urchin)).